Consider the following 262-residue polypeptide: Transcription factor Spi-B (262 aa).

Residues M1–H31 form a TAD1 (Acidic) region. The segment at P41 to F61 is TAD2. Positions A140 to A163 are disordered. Positions L169–D252 form a DNA-binding region, ETS.

It belongs to the ETS family. In terms of assembly, can form homotypic interactions. Interacts with IRF4/Pip. Interacts with JUN. Interacts with TBP. May also interact with CREBBP and EP300. Interacts with NONO/p54(nrb). As to expression, expressed in plasmacytoid dendritic cells (pDCs) and B-cells, not expressed in T-cells or granulocytes. May also be enriched in stem cell populations of the liver.

It localises to the nucleus. Its subcellular location is the cytoplasm. In terms of biological role, sequence specific transcriptional activator which binds to the PU-box, a purine-rich DNA sequence (5'-GAGGAA-3') that can act as a lymphoid-specific enhancer. Promotes development of plasmacytoid dendritic cells (pDCs), also known as type 2 DC precursors (pre-DC2) or natural interferon (IFN)-producing cells. These cells have the capacity to produce large amounts of interferon and block viral replication. May be required for B-cell receptor (BCR) signaling, which is necessary for normal B-cell development and antigenic stimulation. The chain is Transcription factor Spi-B (SPIB) from Homo sapiens (Human).